Consider the following 442-residue polypeptide: UDP-N-acetylglucosamine--peptide N-acetylglucosaminyltransferase stabilizing protein GtfB (442 aa).

The protein belongs to the GtfB family. As to quaternary structure, interacts with glycosyltransferase GtfA (Gtf1). Interacts with glycosyltransferase GtfA; probably forms a heterotetramer with 2 subunits each of GtfA and GtfB. Part of the accessory SecA2/SecY2 protein translocation apparatus.

It is found in the cell membrane. It participates in protein modification; protein glycosylation. In terms of biological role, required for the polymorphic O-glycosylation of the serine-rich repeat protein Srr2. A stabilizing protein that is part of the accessory SecA2/SecY2 system specifically required to export serine-rich repeat proteins, probably Srr2 in this organism. The GtfA-GtfB (Gtf1-Gtf2 in this bacteria) complex adds GlcNAc from UDP-GlcNAc to Srr2 substrate, attaching the first sugar residue. Stabilizes the glycosylation activity of GtfA in vivo. Upon expression in a gtfB deletion mutant of S.parasanguis, GtfB confers incorrect glycosylation and partial complementation of a biofilm formation defect, while GtfA/GtfB restores correct expression of serine-rich repeat protein Fap1 and completely restores a biofilm formation defect in a S.parasanguis double gtfA-gtfB deletion. This is UDP-N-acetylglucosamine--peptide N-acetylglucosaminyltransferase stabilizing protein GtfB from Streptococcus agalactiae.